The primary structure comprises 590 residues: Threonine dehydratase biosynthetic, chloroplastic (590 aa).

A chloroplast-targeting transit peptide spans 1 to 44 (MLSTSTTNSSILPFRSRASSSTFIARPPANFNSIFTTSVRVFPI). K139 is modified (N6-(pyridoxal phosphate)lysine). ACT-like domains lie at 416-488 (ALLG…NISH) and 509-580 (EVFV…IDQY).

Belongs to the serine/threonine dehydratase family. Pyridoxal 5'-phosphate serves as cofactor. In terms of tissue distribution, found at higher levels in flowers than in other organs.

It localises to the plastid. It is found in the chloroplast. It carries out the reaction L-threonine = 2-oxobutanoate + NH4(+). It functions in the pathway amino-acid biosynthesis; L-isoleucine biosynthesis; 2-oxobutanoate from L-threonine: step 1/1. With respect to regulation, allosterically inhibited by isoleucine. This is Threonine dehydratase biosynthetic, chloroplastic from Cicer arietinum (Chickpea).